We begin with the raw amino-acid sequence, 290 residues long: 33 kDa chaperonin (290 aa).

2 disulfides stabilise this stretch: Cys235-Cys237 and Cys268-Cys271.

This sequence belongs to the HSP33 family. Post-translationally, under oxidizing conditions two disulfide bonds are formed involving the reactive cysteines. Under reducing conditions zinc is bound to the reactive cysteines and the protein is inactive.

It localises to the cytoplasm. Redox regulated molecular chaperone. Protects both thermally unfolding and oxidatively damaged proteins from irreversible aggregation. Plays an important role in the bacterial defense system toward oxidative stress. The chain is 33 kDa chaperonin from Streptococcus pyogenes serotype M49.